The chain runs to 288 residues: Small ribosomal subunit protein uS2 (288 aa).

Positions 267–288 (EEVEEVEEEFIPSEIEDEDEKF) are disordered.

This sequence belongs to the universal ribosomal protein uS2 family.

The protein is Small ribosomal subunit protein uS2 of Petrotoga mobilis (strain DSM 10674 / SJ95).